A 116-amino-acid polypeptide reads, in one-letter code: NADH-ubiquinone oxidoreductase chain 3 (116 aa).

Transmembrane regions (helical) follow at residues 3–23, 56–76, and 85–105; these read LITTIITITITLSAVLATISF, FFLIAILFLLFDLEIALLLPL, and PALTLVWSTAVLALLTLGLIY.

This sequence belongs to the complex I subunit 3 family.

The protein localises to the mitochondrion membrane. It catalyses the reaction a ubiquinone + NADH + 5 H(+)(in) = a ubiquinol + NAD(+) + 4 H(+)(out). Its function is as follows. Core subunit of the mitochondrial membrane respiratory chain NADH dehydrogenase (Complex I) that is believed to belong to the minimal assembly required for catalysis. Complex I functions in the transfer of electrons from NADH to the respiratory chain. The immediate electron acceptor for the enzyme is believed to be ubiquinone. The polypeptide is NADH-ubiquinone oxidoreductase chain 3 (MT-ND3) (Oncorhynchus masou (Cherry salmon)).